The following is a 320-amino-acid chain: Methylenetetrahydrofolate dehydrogenase [NAD(+)] (320 aa).

The active site involves C150. NAD(+) is bound by residues 185 to 186, 208 to 209, and 274 to 276; these read RS, DV, and FAC.

Belongs to the tetrahydrofolate dehydrogenase/cyclohydrolase family. Homodimer. The N-terminus is blocked.

It is found in the cytoplasm. The protein resides in the nucleus. It carries out the reaction (6R)-5,10-methylene-5,6,7,8-tetrahydrofolate + NAD(+) = (6R)-5,10-methenyltetrahydrofolate + NADH. Catalyzes oxidation of cytoplasmic one-carbon units for purine biosynthesis. The protein is Methylenetetrahydrofolate dehydrogenase [NAD(+)] (MTD1) of Saccharomyces cerevisiae (strain ATCC 204508 / S288c) (Baker's yeast).